The sequence spans 299 residues: Tyrosine recombinase XerC (299 aa).

The 85-residue stretch at 1-85 (MDQHLDAYCM…AVRGFYKYLN (85 aa)) folds into the Core-binding (CB) domain. The 180-residue stretch at 106 to 285 (RLPKTLDTDR…DFQHLATVYD (180 aa)) folds into the Tyr recombinase domain. Catalysis depends on residues Arg146, Lys170, His237, Arg240, and His263. Tyr272 acts as the O-(3'-phospho-DNA)-tyrosine intermediate in catalysis.

Belongs to the 'phage' integrase family. XerC subfamily. Forms a cyclic heterotetrameric complex composed of two molecules of XerC and two molecules of XerD.

It is found in the cytoplasm. Its function is as follows. Site-specific tyrosine recombinase, which acts by catalyzing the cutting and rejoining of the recombining DNA molecules. The XerC-XerD complex is essential to convert dimers of the bacterial chromosome into monomers to permit their segregation at cell division. It also contributes to the segregational stability of plasmids. The protein is Tyrosine recombinase XerC of Pseudomonas syringae pv. syringae (strain B728a).